Here is a 179-residue protein sequence, read N- to C-terminus: uncharacterized protein (179 aa).

The signal sequence occupies residues 1–27; that stretch reads MNKSMIQSGGYVLLAGLILAMSSTLFA. A disulfide bridge connects residues C43 and C83.

This sequence belongs to the fimbrial protein family.

It localises to the fimbrium. Its function is as follows. Part of the yfcOPQRSUV fimbrial operon. Could contribute to adhesion to various surfaces in specific environmental niches. Increases adhesion to eukaryotic T24 bladder epithelial cells in the absence of fim genes. This is an uncharacterized protein from Escherichia coli (strain K12).